The chain runs to 400 residues: Sphingosine 1-phosphate receptor 5 (400 aa).

Residues 1–41 (MEPGLLRPAPVSEVIVLHYNYTGKLRGARYQPGAGLRADAA) lie on the Extracellular side of the membrane. A glycan (N-linked (GlcNAc...) asparagine) is linked at Asn20. The helical transmembrane segment at 42–62 (VCLAVCAFIVLENLAVLLVLV) threads the bilayer. Over 63 to 68 (RHPRFH) the chain is Cytoplasmic. A helical membrane pass occupies residues 69–89 (APMFLLLGSLTLSDLLAGAAY). The Extracellular portion of the chain corresponds to 90–111 (ATNILLSGPLTLRLSPALWFAR). Residues 112 to 132 (EGGVFVALAASVLSLLAIALE) form a helical membrane-spanning segment. At 133–151 (RHLTMARRGPAPAASRART) the chain is on the cytoplasmic side. The helical transmembrane segment at 152–172 (LAMAVAAWGASLLLGLLPALG) threads the bilayer. Residues 173–192 (WNCLGRLETCSTVLPLYAKA) lie on the Extracellular side of the membrane. A helical transmembrane segment spans residues 193 to 213 (YVLFCVLAFLGILAAICALYA). At 214-253 (RIYCQVRANARRLRAGPGSRRATSSSRSRHTPRSLALLRT) the chain is on the cytoplasmic side. Residues 254 to 274 (LSVVLLAFVACWGPLFLLLLL) form a helical membrane-spanning segment. Topologically, residues 275 to 288 (DVACPARACPVLLQ) are extracellular. The chain crosses the membrane as a helical span at residues 289–309 (ADPFLGLAMANSLLNPIIYTF). The Cytoplasmic segment spans residues 310–400 (TNRDLRHALL…NRSLVPTATD (91 aa)). The S-palmitoyl cysteine moiety is linked to residue Cys324. Positions 331-400 (QDSSNSLQRS…NRSLVPTATD (70 aa)) are disordered. 3 positions are modified to phosphoserine: Ser340, Ser342, and Ser384. Over residues 360–400 (DRSSSPSEHLSPQQDGVDTSCSTGSPGVATANRSLVPTATD) the composition is skewed to polar residues.

It belongs to the G-protein coupled receptor 1 family. Expressed in spleen and brain. In the CNS expression is restricted to oligodendrocytes.

The protein localises to the cell membrane. Receptor for the lysosphingolipid sphingosine 1-phosphate (S1P). S1P is a bioactive lysophospholipid that elicits diverse physiological effect on most types of cells and tissues. Is coupled to both the G(i/0)alpha and G(12) subclass of heteromeric G-proteins. S1P activation on oligodendroglial cells modulates two distinct functional pathways mediating either process retraction or cell survival. S1P activation on O4-positive pre-oligodendrocytes induces process retraction via a Rho kinase/collapsin response-mediated protein signaling pathway. The S1P-induced survival of mature oligodendrocytes is mediated through a pertussis toxin-sensitive, Akt-dependent pathway. S1P activation on oligodendroglial cells modulates two distinct functional pathways mediating either process retraction or cell survival. These effects depend on the developmental stage of the cell. This chain is Sphingosine 1-phosphate receptor 5 (S1pr5), found in Mus musculus (Mouse).